Here is a 583-residue protein sequence, read N- to C-terminus: Thiol:disulfide interchange protein DsbD (583 aa).

The N-terminal stretch at 1–18 (MRRLFLLLFMLFTTLAHA) is a signal peptide. 2 disulfides stabilise this stretch: Cys-118/Cys-124 and Cys-186/Cys-306. The next 8 helical transmembrane spans lie at 168 to 188 (GLGL…PCSL), 214 to 234 (SYVL…ALLG), 245 to 265 (WVLG…FGFF), 289 to 309 (LIGC…CMTA), 326 to 346 (FGGL…LLLV), 359 to 379 (WMNL…IYML), 382 to 402 (VLNP…VAYC), and 413 to 433 (LLHL…MLLV). Residues 458 to 581 (VTAHDAFTTV…FLQRWTQTRE (124 aa)) enclose the Thioredoxin domain. A disulfide bridge connects residues Cys-496 and Cys-499.

It belongs to the thioredoxin family. DsbD subfamily.

It localises to the cell inner membrane. It catalyses the reaction [protein]-dithiol + NAD(+) = [protein]-disulfide + NADH + H(+). The catalysed reaction is [protein]-dithiol + NADP(+) = [protein]-disulfide + NADPH + H(+). Its function is as follows. Required to facilitate the formation of correct disulfide bonds in some periplasmic proteins and for the assembly of the periplasmic c-type cytochromes. Acts by transferring electrons from cytoplasmic thioredoxin to the periplasm. This transfer involves a cascade of disulfide bond formation and reduction steps. This Pseudomonas fluorescens (strain ATCC BAA-477 / NRRL B-23932 / Pf-5) protein is Thiol:disulfide interchange protein DsbD.